The following is a 558-amino-acid chain: Polysialic acid transport protein KpsD (558 aa).

The N-terminal stretch at 1-20 (MKLFKSILLIAACHAAQASA) is a signal peptide.

It to E.coli K1 KpsD.

It is found in the periplasm. Functionally, involved in the translocation of the polysialic acid capsule across the outer membrane to the cell surface. May function as the periplasmic binding element of the PSA transport system, in which it transiently interacts with the membrane component of the transporter, binds polysaccharide and transports the polymer to a component in the outer membrane. The protein is Polysialic acid transport protein KpsD (kpsD) of Escherichia coli.